A 331-amino-acid polypeptide reads, in one-letter code: Aspartate carbamoyltransferase catalytic subunit (331 aa).

R76 and T77 together coordinate carbamoyl phosphate. K104 contributes to the L-aspartate binding site. Carbamoyl phosphate contacts are provided by R126, H154, and Q157. Residues R187 and R246 each coordinate L-aspartate. Carbamoyl phosphate contacts are provided by G287 and P288.

It belongs to the aspartate/ornithine carbamoyltransferase superfamily. ATCase family. In terms of assembly, heterododecamer (2C3:3R2) of six catalytic PyrB chains organized as two trimers (C3), and six regulatory PyrI chains organized as three dimers (R2).

It carries out the reaction carbamoyl phosphate + L-aspartate = N-carbamoyl-L-aspartate + phosphate + H(+). It functions in the pathway pyrimidine metabolism; UMP biosynthesis via de novo pathway; (S)-dihydroorotate from bicarbonate: step 2/3. Functionally, catalyzes the condensation of carbamoyl phosphate and aspartate to form carbamoyl aspartate and inorganic phosphate, the committed step in the de novo pyrimidine nucleotide biosynthesis pathway. In Dehalococcoides mccartyi (strain CBDB1), this protein is Aspartate carbamoyltransferase catalytic subunit.